Reading from the N-terminus, the 228-residue chain is Protein N-lysine methyltransferase METTL21D (228 aa).

Position 2 is an N-acetylalanine (alanine 2). S-adenosyl-L-methionine contacts are provided by residues tryptophan 43, 75-77, aspartate 96, tryptophan 126, alanine 142, and tyrosine 147; that span reads GSG.

Belongs to the methyltransferase superfamily. METTL21 family. In terms of assembly, interacts with ALKBH6. Interacts with ASPSCR1 and UBXN6; interaction with ASPSCR1, but not with UBXN6, enhances VCP methylation. Widely expressed.

The protein resides in the cytoplasm. It carries out the reaction L-lysyl-[protein] + 3 S-adenosyl-L-methionine = N(6),N(6),N(6)-trimethyl-L-lysyl-[protein] + 3 S-adenosyl-L-homocysteine + 3 H(+). Protein N-lysine methyltransferase that specifically trimethylates 'Lys-315' of VCP/p97; this modification may decrease VCP ATPase activity. The chain is Protein N-lysine methyltransferase METTL21D (Vcpkmt) from Mus musculus (Mouse).